The chain runs to 351 residues: Phosphate acyltransferase (351 aa).

Belongs to the PlsX family. As to quaternary structure, homodimer. Probably interacts with PlsY.

It is found in the cytoplasm. The catalysed reaction is a fatty acyl-[ACP] + phosphate = an acyl phosphate + holo-[ACP]. It functions in the pathway lipid metabolism; phospholipid metabolism. In terms of biological role, catalyzes the reversible formation of acyl-phosphate (acyl-PO(4)) from acyl-[acyl-carrier-protein] (acyl-ACP). This enzyme utilizes acyl-ACP as fatty acyl donor, but not acyl-CoA. The protein is Phosphate acyltransferase of Neisseria meningitidis serogroup A / serotype 4A (strain DSM 15465 / Z2491).